The sequence spans 295 residues: Nucleotide-binding protein RD1_1380 (295 aa).

16–23 (GPSGAGRS) provides a ligand contact to ATP. Residue 63-66 (DPRN) participates in GTP binding.

The protein belongs to the RapZ-like family.

Displays ATPase and GTPase activities. This Roseobacter denitrificans (strain ATCC 33942 / OCh 114) (Erythrobacter sp. (strain OCh 114)) protein is Nucleotide-binding protein RD1_1380.